A 474-amino-acid polypeptide reads, in one-letter code: Dihydrolipoyl dehydrogenase (474 aa).

FAD is bound by residues 36–44 (EAKDMGGTC), K53, and G119. C44 and C49 form a disulfide bridge. NAD(+) is bound by residues 184–188 (GSGYI), E207, and 275–278 (ATGR). Residues D323 and A331 each contribute to the FAD site. Residue H459 is the Proton acceptor of the active site.

This sequence belongs to the class-I pyridine nucleotide-disulfide oxidoreductase family. In terms of assembly, homodimer. The cofactor is FAD.

It is found in the cell inner membrane. The catalysed reaction is N(6)-[(R)-dihydrolipoyl]-L-lysyl-[protein] + NAD(+) = N(6)-[(R)-lipoyl]-L-lysyl-[protein] + NADH + H(+). Its function is as follows. Lipoamide dehydrogenase is a component of the alpha-ketoacid dehydrogenase complexes. This Synechocystis sp. (strain ATCC 27184 / PCC 6803 / Kazusa) protein is Dihydrolipoyl dehydrogenase (lpdA).